The sequence spans 257 residues: Hydroxyacylglutathione hydrolase (257 aa).

7 residues coordinate Zn(2+): His-54, His-56, Asp-58, His-59, His-113, Asp-137, and His-175.

The protein belongs to the metallo-beta-lactamase superfamily. Glyoxalase II family. Monomer. The cofactor is Zn(2+).

The catalysed reaction is an S-(2-hydroxyacyl)glutathione + H2O = a 2-hydroxy carboxylate + glutathione + H(+). The protein operates within secondary metabolite metabolism; methylglyoxal degradation; (R)-lactate from methylglyoxal: step 2/2. Its function is as follows. Thiolesterase that catalyzes the hydrolysis of S-D-lactoyl-glutathione to form glutathione and D-lactic acid. In Trichormus variabilis (strain ATCC 29413 / PCC 7937) (Anabaena variabilis), this protein is Hydroxyacylglutathione hydrolase.